Here is a 304-residue protein sequence, read N- to C-terminus: Cyclin-dependent kinase 3 (304 aa).

Residues 4 to 286 enclose the Protein kinase domain; it reads FQKVEKIGEG…AKTALAHPYF (283 aa). ATP-binding positions include 10 to 18 and lysine 33; that span reads IGEGTYGVV. Aspartate 127 serves as the catalytic Proton acceptor.

The protein belongs to the protein kinase superfamily. CMGC Ser/Thr protein kinase family. CDC2/CDKX subfamily. In terms of assembly, interacts with CABLES1 and ATF1. Binding to CCNC/cyclin-C promotes RB1 phosphorylation. Binds to CABLES2.

The enzyme catalyses L-seryl-[protein] + ATP = O-phospho-L-seryl-[protein] + ADP + H(+). The catalysed reaction is L-threonyl-[protein] + ATP = O-phospho-L-threonyl-[protein] + ADP + H(+). Its function is as follows. Serine/threonine-protein kinase that plays a critical role in the control of the eukaryotic cell cycle; involved in G0-G1 and G1-S cell cycle transitions. Interacts with CCNC/cyclin-C during interphase. Phosphorylates histone H1, ATF1, RB1 and CABLES1. ATF1 phosphorylation triggers ATF1 transactivation and transcriptional activities, and promotes cell proliferation and transformation. CDK3/cyclin-C mediated RB1 phosphorylation is required for G0-G1 transition. Promotes G1-S transition probably by contributing to the activation of E2F1, E2F2 and E2F3 in a RB1-independent manner. This chain is Cyclin-dependent kinase 3 (Cdk3), found in Mus musculus (Mouse).